A 378-amino-acid chain; its full sequence is Chaperone protein DnaJ 1 (378 aa).

The 65-residue stretch at 4–68 (DYYGILGVDR…DKRRIVDMGG (65 aa)) folds into the J domain. Residues 129-211 (GVKKDLTLDT…CAGDGRVRAR (83 aa)) form a CR-type zinc finger. The Zn(2+) site is built by cysteine 142, cysteine 145, cysteine 159, cysteine 162, cysteine 185, cysteine 188, cysteine 199, and cysteine 202. CXXCXGXG motif repeat units lie at residues 142-149 (CSKCHGSG), 159-166 (CGTCHGSG), 185-192 (CHTCNGTG), and 199-206 (CDECAGDG).

Belongs to the DnaJ family. Homodimer. The cofactor is Zn(2+).

Its subcellular location is the cytoplasm. Its function is as follows. Participates actively in the response to hyperosmotic and heat shock by preventing the aggregation of stress-denatured proteins and by disaggregating proteins, also in an autonomous, DnaK-independent fashion. Unfolded proteins bind initially to DnaJ; upon interaction with the DnaJ-bound protein, DnaK hydrolyzes its bound ATP, resulting in the formation of a stable complex. GrpE releases ADP from DnaK; ATP binding to DnaK triggers the release of the substrate protein, thus completing the reaction cycle. Several rounds of ATP-dependent interactions between DnaJ, DnaK and GrpE are required for fully efficient folding. Also involved, together with DnaK and GrpE, in the DNA replication of plasmids through activation of initiation proteins. This is Chaperone protein DnaJ 1 from Corynebacterium efficiens (strain DSM 44549 / YS-314 / AJ 12310 / JCM 11189 / NBRC 100395).